The sequence spans 154 residues: Superoxide dismutase [Cu-Zn] (154 aa).

Cu cation contacts are provided by His-47, His-49, and His-64. Cys-58 and Cys-147 are joined by a disulfide. Residues His-64, His-72, His-81, and Asp-84 each contribute to the Zn(2+) site. Residue His-121 coordinates Cu cation. Positions 125-136 are enriched in basic and acidic residues; sequence DDLGKGGNEESL. Residues 125 to 144 form a disordered region; the sequence is DDLGKGGNEESLKTGNAGPR. Arg-144 is a binding site for substrate.

Belongs to the Cu-Zn superoxide dismutase family. As to quaternary structure, homodimer. Cu cation is required as a cofactor. It depends on Zn(2+) as a cofactor.

The protein localises to the cytoplasm. It catalyses the reaction 2 superoxide + 2 H(+) = H2O2 + O2. Functionally, destroys radicals which are normally produced within the cells and which are toxic to biological systems. In Candida glabrata (strain ATCC 2001 / BCRC 20586 / JCM 3761 / NBRC 0622 / NRRL Y-65 / CBS 138) (Yeast), this protein is Superoxide dismutase [Cu-Zn] (SOD1).